A 199-amino-acid polypeptide reads, in one-letter code: MQYPLPIARLIDNYMKLPGIGEKTATRLAFYTMDMPEQDVEDFSKSLMQVKENLHSCSICGNITESDPCEICRDSNRDRSTIMVVEQPKDVMAFEEMGEYNGLYHVLHGVLSPMDGVGPEEINIKSLITRLQKQDEVKEVILALNSSPEGEATAMYLAKLIKPAGLKVTRLAAGLAVGSDIEYANSITLKRAVQGRTDL.

The segment at 57-72 (CSICGNITESDPCEIC) adopts a C4-type zinc-finger fold. A Toprim domain is found at 80–176 (STIMVVEQPK…KVTRLAAGLA (97 aa)).

The protein belongs to the RecR family.

May play a role in DNA repair. It seems to be involved in an RecBC-independent recombinational process of DNA repair. It may act with RecF and RecO. This is Recombination protein RecR from Lactobacillus johnsonii (strain CNCM I-12250 / La1 / NCC 533).